We begin with the raw amino-acid sequence, 396 residues long: Transcription factor E2FC (396 aa).

A compositionally biased stretch (polar residues) spans Pro-34–Phe-48. Residues Pro-34 to Ser-57 form a disordered region. Residues Arg-155–Gly-220 mediate DNA binding. A coiled-coil region spans residues Gln-226–Asp-268. The leucine-zipper stretch occupies residues Leu-236–Leu-264. The segment at Asp-376 to Trp-391 is retinoblastoma protein binding.

Belongs to the E2F/DP family. In terms of assembly, heterodimer with DP proteins. Interacts preferentially with DPB, but also with DPA. No interaction with DPB when phosphorylated. Interacts with SKP2A, CDKA-1 and maize retinoblastoma-related protein RBR1. Component of a DREAM-like complex which modulates a variety of developmentally regulated genes and of the mitotic genes in proliferating and differentiated cells. Interacts with MYB3R3 at later stages of leaves development. Phosphorylated by cyclin-dependent kinase. Phosphorylation is necessary to target E2FC for proteolysis. In terms of tissue distribution, expressed in meristematic areas, vascular tissues, apical part of the roots, cotyledons, upper region of the hypocotyls, trichomes, young flower buds and pollen grains.

It is found in the cytoplasm. In terms of biological role, involved in transcriptional repression. May act by repressing E2F-regulated genes in mature differentiated cells, but is not an antagonist of E2FA. Restricts cell division and is involved in the coordination between cell proliferation and endoreduplication during development. May play a role during the transition from skotomorphogenesis to photomorphogenesis. Regulated by phosphorylation-dependent proteolysis via the protein-ubiquitin ligase SCF(SKP2A) complex. The chain is Transcription factor E2FC (E2FC) from Arabidopsis thaliana (Mouse-ear cress).